Here is a 288-residue protein sequence, read N- to C-terminus: Light-independent protochlorophyllide reductase iron-sulfur ATP-binding protein (288 aa).

Residues 12-17 (GIGKST) and K41 each bind ATP. S16 is a Mg(2+) binding site. Positions 97 and 131 each coordinate [4Fe-4S] cluster. 182–183 (NR) serves as a coordination point for ATP.

It belongs to the NifH/BchL/ChlL family. Homodimer. Protochlorophyllide reductase is composed of three subunits; ChlL, ChlN and ChlB. Requires [4Fe-4S] cluster as cofactor.

It catalyses the reaction chlorophyllide a + oxidized 2[4Fe-4S]-[ferredoxin] + 2 ADP + 2 phosphate = protochlorophyllide a + reduced 2[4Fe-4S]-[ferredoxin] + 2 ATP + 2 H2O. It participates in porphyrin-containing compound metabolism; chlorophyll biosynthesis (light-independent). Functionally, component of the dark-operative protochlorophyllide reductase (DPOR) that uses Mg-ATP and reduced ferredoxin to reduce ring D of protochlorophyllide (Pchlide) to form chlorophyllide a (Chlide). This reaction is light-independent. The L component serves as a unique electron donor to the NB-component of the complex, and binds Mg-ATP. The sequence is that of Light-independent protochlorophyllide reductase iron-sulfur ATP-binding protein from Synechocystis sp. (strain ATCC 27184 / PCC 6803 / Kazusa).